The primary structure comprises 114 residues: Fatty acid-binding protein, liver (114 aa).

Belongs to the calycin superfamily. Fatty-acid binding protein (FABP) family. Post-translationally, the N-terminus is blocked.

The protein resides in the cytoplasm. In terms of biological role, FABPs are thought to play a role in the intracellular transport of long-chain fatty acids and their acyl-CoA esters. The chain is Fatty acid-binding protein, liver from Lethenteron camtschaticum (Japanese lamprey).